We begin with the raw amino-acid sequence, 146 residues long: Globin-1 (146 aa).

The region spanning 9 to 146 (QLTADVKKDL…KLVAVVQAAL (138 aa)) is the Globin domain. Histidine 101 provides a ligand contact to heme b.

It belongs to the globin family. Homodimer.

The protein resides in the cytoplasm. The sequence is that of Globin-1 from Anadara inaequivalvis (Inequivalve ark).